Consider the following 407-residue polypeptide: MQPLAEATTISKIAAVIVAAGRGERAGQSIEGPKQYRRIGGEAVLARTLRAFIDCPLVDSIVVVIHPDDHVLYERALQENCDTILVVNGGATRQESTRLGLLALRDYAPQYVMIHDGVRPFVSQDLLKRIVENLAPDEGVLPALAVSDTLKQSATDGTVKTTVPRVGLFAAQTPQAFPYTPILDAHEKAFAISRSDFTDDAAIAEWQSIAVRIIEGSADNTKLTWAKDIEMADKRLRQDHVSFPDIRTGNGYDVHSFEPGDHVTLCGVKIPHEAKLNGHSDADVGLHALTDALLATRGAGDIGTHFPPSDPQWKGAASRIFIEHAANIVREAGGRIANVDVTFISEAPKIGPHRAAMTEALCDMLGIAADRVSIKATTNEKLGFVGRREGIAAIATATVIYPGEVPE.

A 2-C-methyl-D-erythritol 4-phosphate cytidylyltransferase region spans residues 1–246 (MQPLAEATTI…RQDHVSFPDI (246 aa)). The 2-C-methyl-D-erythritol 2,4-cyclodiphosphate synthase stretch occupies residues 247 to 407 (RTGNGYDVHS…TVIYPGEVPE (161 aa)). A divalent metal cation-binding residues include Asp253 and His255. Residues 253-255 (DVH) and 279-280 (HS) each bind 4-CDP-2-C-methyl-D-erythritol 2-phosphate. His287 contacts a divalent metal cation. Residues 301-303 (DIG), 377-380 (TTNE), Phe384, and Arg387 contribute to the 4-CDP-2-C-methyl-D-erythritol 2-phosphate site.

In the N-terminal section; belongs to the IspD/TarI cytidylyltransferase family. IspD subfamily. It in the C-terminal section; belongs to the IspF family. The cofactor is a divalent metal cation.

It catalyses the reaction 2-C-methyl-D-erythritol 4-phosphate + CTP + H(+) = 4-CDP-2-C-methyl-D-erythritol + diphosphate. The enzyme catalyses 4-CDP-2-C-methyl-D-erythritol 2-phosphate = 2-C-methyl-D-erythritol 2,4-cyclic diphosphate + CMP. It participates in isoprenoid biosynthesis; isopentenyl diphosphate biosynthesis via DXP pathway; isopentenyl diphosphate from 1-deoxy-D-xylulose 5-phosphate: step 2/6. The protein operates within isoprenoid biosynthesis; isopentenyl diphosphate biosynthesis via DXP pathway; isopentenyl diphosphate from 1-deoxy-D-xylulose 5-phosphate: step 4/6. Bifunctional enzyme that catalyzes the formation of 4-diphosphocytidyl-2-C-methyl-D-erythritol from CTP and 2-C-methyl-D-erythritol 4-phosphate (MEP) (IspD), and catalyzes the conversion of 4-diphosphocytidyl-2-C-methyl-D-erythritol 2-phosphate (CDP-ME2P) to 2-C-methyl-D-erythritol 2,4-cyclodiphosphate (ME-CPP) with a corresponding release of cytidine 5-monophosphate (CMP) (IspF). In Brucella anthropi (strain ATCC 49188 / DSM 6882 / CCUG 24695 / JCM 21032 / LMG 3331 / NBRC 15819 / NCTC 12168 / Alc 37) (Ochrobactrum anthropi), this protein is Bifunctional enzyme IspD/IspF.